A 341-amino-acid chain; its full sequence is tRNA (guanine-N(7)-)-methyltransferase (341 aa).

The S-adenosyl-L-methionine site is built by glutamate 75, glutamate 100, aspartate 127, and aspartate 150. The active site involves aspartate 150. Residue lysine 154 participates in substrate binding. The interaction with RNA stretch occupies residues 156–161 (RHNKRR). Residue aspartate 186 participates in substrate binding.

This sequence belongs to the class I-like SAM-binding methyltransferase superfamily. TrmB family.

It catalyses the reaction guanosine(46) in tRNA + S-adenosyl-L-methionine = N(7)-methylguanosine(46) in tRNA + S-adenosyl-L-homocysteine. It participates in tRNA modification; N(7)-methylguanine-tRNA biosynthesis. Catalyzes the formation of N(7)-methylguanine at position 46 (m7G46) in tRNA. This is tRNA (guanine-N(7)-)-methyltransferase from Xanthomonas euvesicatoria pv. vesicatoria (strain 85-10) (Xanthomonas campestris pv. vesicatoria).